A 480-amino-acid chain; its full sequence is Proline--tRNA ligase (480 aa).

This sequence belongs to the class-II aminoacyl-tRNA synthetase family. ProS type 3 subfamily. As to quaternary structure, homodimer.

The protein resides in the cytoplasm. The catalysed reaction is tRNA(Pro) + L-proline + ATP = L-prolyl-tRNA(Pro) + AMP + diphosphate. Catalyzes the attachment of proline to tRNA(Pro) in a two-step reaction: proline is first activated by ATP to form Pro-AMP and then transferred to the acceptor end of tRNA(Pro). The sequence is that of Proline--tRNA ligase from Mycobacterium leprae (strain Br4923).